Consider the following 666-residue polypeptide: Kinesin-like protein Nod (666 aa).

The 313-residue stretch at Ala8–Leu320 folds into the Kinesin motor domain. Gly87 to Ser94 serves as a coordination point for ATP. Positions Gly423–Asn450 are disordered. The stretch at Glu639 to Thr666 forms a coiled coil.

The protein belongs to the TRAFAC class myosin-kinesin ATPase superfamily. Kinesin family. In terms of tissue distribution, in adult female, found in meiotically active ovaries.

The protein localises to the cytoplasm. It is found in the cytoskeleton. Its function is as follows. Required for the distributive chromosome segregation of non-exchange chromosomes during meiosis. May be a microtubule motor required to hold distributively 'paired' chromosomes at the metaphase plate until anaphase. The protein is Kinesin-like protein Nod (nod) of Drosophila melanogaster (Fruit fly).